A 145-amino-acid polypeptide reads, in one-letter code: Large ribosomal subunit protein cL37 (145 aa).

Residues Met1–Ser63 constitute a chloroplast transit peptide. Residues Lys125–Val145 are disordered.

The protein belongs to the chloroplast-specific ribosomal protein cL37 family. In terms of assembly, part of the 50S ribosomal subunit.

The protein resides in the plastid. It is found in the chloroplast. The chain is Large ribosomal subunit protein cL37 (PSRP5) from Pisum sativum (Garden pea).